Consider the following 270-residue polypeptide: Undecaprenyl-diphosphatase (270 aa).

Helical transmembrane passes span 1–21 (MDLF…FLPI), 39–59 (QGLV…MLYF), 87–107 (SHLV…GLAC), 114–134 (VARD…LLWW), 147–167 (ALSW…LIPG), 193–213 (FLMA…DLFA), 223–243 (FLGV…HGLL), and 250–270 (TMTP…ATLG).

This sequence belongs to the UppP family.

The protein resides in the cell inner membrane. It catalyses the reaction di-trans,octa-cis-undecaprenyl diphosphate + H2O = di-trans,octa-cis-undecaprenyl phosphate + phosphate + H(+). Its function is as follows. Catalyzes the dephosphorylation of undecaprenyl diphosphate (UPP). Confers resistance to bacitracin. The protein is Undecaprenyl-diphosphatase of Magnetococcus marinus (strain ATCC BAA-1437 / JCM 17883 / MC-1).